Here is a 247-residue protein sequence, read N- to C-terminus: uncharacterized protein (247 aa).

6 helical membrane-spanning segments follow: residues 19–39 (IFFTFLLCFIICTIYSESIMF), 73–93 (FFTSIYCTFPYFFYQFWAFFI), 106–126 (FLSFFFFTLLFFSCIIIYFII), 155–175 (YIQFTFQIFSYFFVLFQCPLF), 196–216 (YIYFLFLILAAFLSPPDILSQ), and 217–237 (FFLFSLIVFMYELCVFYSCFY).

It belongs to the TatC family.

It is found in the mitochondrion membrane. This is an uncharacterized protein from Nephroselmis olivacea (Green alga).